We begin with the raw amino-acid sequence, 122 residues long: Large ribosomal subunit protein uL14 (122 aa).

This sequence belongs to the universal ribosomal protein uL14 family. As to quaternary structure, part of the 50S ribosomal subunit. Forms a cluster with proteins L3 and L19. In the 70S ribosome, L14 and L19 interact and together make contacts with the 16S rRNA in bridges B5 and B8.

Its function is as follows. Binds to 23S rRNA. Forms part of two intersubunit bridges in the 70S ribosome. This chain is Large ribosomal subunit protein uL14, found in Microcystis aeruginosa (strain NIES-843 / IAM M-2473).